We begin with the raw amino-acid sequence, 190 residues long: Small ribosomal subunit protein uS4 (190 aa).

The 77-residue stretch at 105-181 folds into the S4 RNA-binding domain; that stretch reads RRLQTLVYKL…RKKAKAAEGG (77 aa). The segment at 163–190 is disordered; the sequence is GGGRPGRVRRKKAKAAEGGDGDAEEDEE. The segment covering 181–190 has biased composition (acidic residues); it reads GDGDAEEDEE.

Belongs to the universal ribosomal protein uS4 family.

In Podospora anserina (Pleurage anserina), this protein is Small ribosomal subunit protein uS4 (RPS9).